The primary structure comprises 260 residues: Adenosylcobinamide-GDP ribazoletransferase (260 aa).

Transmembrane regions (helical) follow at residues 40 to 60 (AFPF…LLLL), 64 to 84 (TDPL…TGAL), 117 to 137 (YGAI…AAII), 142 to 162 (PLAA…AIAW), 188 to 208 (HFAL…PFGL), and 210 to 230 (PLVA…VFIR).

The protein belongs to the CobS family. Requires Mg(2+) as cofactor.

It localises to the cell inner membrane. The catalysed reaction is alpha-ribazole + adenosylcob(III)inamide-GDP = adenosylcob(III)alamin + GMP + H(+). It catalyses the reaction alpha-ribazole 5'-phosphate + adenosylcob(III)inamide-GDP = adenosylcob(III)alamin 5'-phosphate + GMP + H(+). It functions in the pathway cofactor biosynthesis; adenosylcobalamin biosynthesis; adenosylcobalamin from cob(II)yrinate a,c-diamide: step 7/7. Its function is as follows. Joins adenosylcobinamide-GDP and alpha-ribazole to generate adenosylcobalamin (Ado-cobalamin). Also synthesizes adenosylcobalamin 5'-phosphate from adenosylcobinamide-GDP and alpha-ribazole 5'-phosphate. The protein is Adenosylcobinamide-GDP ribazoletransferase of Rhizobium etli (strain ATCC 51251 / DSM 11541 / JCM 21823 / NBRC 15573 / CFN 42).